A 121-amino-acid polypeptide reads, in one-letter code: Large ribosomal subunit protein bL12 (121 aa).

Belongs to the bacterial ribosomal protein bL12 family. In terms of assembly, homodimer. Part of the ribosomal stalk of the 50S ribosomal subunit. Forms a multimeric L10(L12)X complex, where L10 forms an elongated spine to which 2 to 4 L12 dimers bind in a sequential fashion. Binds GTP-bound translation factors.

Its function is as follows. Forms part of the ribosomal stalk which helps the ribosome interact with GTP-bound translation factors. Is thus essential for accurate translation. This chain is Large ribosomal subunit protein bL12, found in Acinetobacter baylyi (strain ATCC 33305 / BD413 / ADP1).